Here is a 206-residue protein sequence, read N- to C-terminus: Recombination protein RecR (206 aa).

The C4-type zinc finger occupies 60–75 (CAMCNTFCEGGLCDIC). The Toprim domain occupies 83 to 178 (RRLMVVHMPA…KVSRLSQGIP (96 aa)).

This sequence belongs to the RecR family.

May play a role in DNA repair. It seems to be involved in an RecBC-independent recombinational process of DNA repair. It may act with RecF and RecO. The polypeptide is Recombination protein RecR (Neisseria meningitidis serogroup B (strain ATCC BAA-335 / MC58)).